We begin with the raw amino-acid sequence, 244 residues long: Protein-L-isoaspartate O-methyltransferase (244 aa).

The tract at residues 1 to 39 (MINPFSSFRWRHSSRSPAGIPEVEPQPPDASDPFASQRE) is disordered. Residue Ser-92 is part of the active site.

This sequence belongs to the methyltransferase superfamily. L-isoaspartyl/D-aspartyl protein methyltransferase family.

It is found in the cytoplasm. It carries out the reaction [protein]-L-isoaspartate + S-adenosyl-L-methionine = [protein]-L-isoaspartate alpha-methyl ester + S-adenosyl-L-homocysteine. Functionally, catalyzes the methyl esterification of L-isoaspartyl residues in peptides and proteins that result from spontaneous decomposition of normal L-aspartyl and L-asparaginyl residues. It plays a role in the repair and/or degradation of damaged proteins. The chain is Protein-L-isoaspartate O-methyltransferase from Synechococcus sp. (strain JA-2-3B'a(2-13)) (Cyanobacteria bacterium Yellowstone B-Prime).